Reading from the N-terminus, the 60-residue chain is Adenylate kinase isoenzyme 1 (60 aa).

Position 9 to 14 (9 to 14 (GSGKGT)) interacts with ATP. S25 bears the Phosphoserine mark. The tract at residues 25–53 (STGDLLRVDSSNGFLIDGYPRQGEEFERK) is NMP. T26 and R31 together coordinate AMP.

Belongs to the adenylate kinase family. AK1 subfamily. In terms of assembly, monomer. The cofactor is Mg(2+).

It localises to the cytoplasm. It catalyses the reaction a ribonucleoside 5'-phosphate + ATP = a ribonucleoside 5'-diphosphate + ADP. The catalysed reaction is AMP + ATP = 2 ADP. It carries out the reaction dAMP + ATP = dADP + ADP. The enzyme catalyses dATP + AMP = dADP + ADP. It catalyses the reaction dAMP + dATP = 2 dADP. The catalysed reaction is a 2'-deoxyribonucleoside 5'-diphosphate + ATP = a 2'-deoxyribonucleoside 5'-triphosphate + ADP. It carries out the reaction a ribonucleoside 5'-diphosphate + ATP = a ribonucleoside 5'-triphosphate + ADP. The enzyme catalyses CDP + GTP = CTP + GDP. It catalyses the reaction GDP + ATP = GTP + ADP. The catalysed reaction is UDP + ATP = UTP + ADP. It carries out the reaction GTP + UDP = UTP + GDP. The enzyme catalyses dTDP + GTP = dTTP + GDP. It catalyses the reaction dCDP + GTP = dCTP + GDP. The catalysed reaction is dGDP + ATP = dGTP + ADP. It carries out the reaction dADP + GTP = dATP + GDP. The enzyme catalyses thiamine diphosphate + ADP = thiamine triphosphate + AMP. Catalyzes the reversible transfer of the terminal phosphate group between ATP and AMP. Also displays broad nucleoside diphosphate kinase activity. Plays an important role in cellular energy homeostasis and in adenine nucleotide metabolism. Also catalyzes at a very low rate the synthesis of thiamine triphosphate (ThTP) from thiamine diphosphate (ThDP) and ADP. The polypeptide is Adenylate kinase isoenzyme 1 (Ak1) (Mesocricetus auratus (Golden hamster)).